A 433-amino-acid polypeptide reads, in one-letter code: D-amino acid dehydrogenase (433 aa).

3–17 contributes to the FAD binding site; it reads VLVLGSGVIGTTSAY.

Belongs to the DadA oxidoreductase family. FAD serves as cofactor.

The enzyme catalyses a D-alpha-amino acid + A + H2O = a 2-oxocarboxylate + AH2 + NH4(+). It participates in amino-acid degradation; D-alanine degradation; NH(3) and pyruvate from D-alanine: step 1/1. Its function is as follows. Oxidative deamination of D-amino acids. The protein is D-amino acid dehydrogenase of Pseudomonas savastanoi pv. phaseolicola (strain 1448A / Race 6) (Pseudomonas syringae pv. phaseolicola (strain 1448A / Race 6)).